Here is a 453-residue protein sequence, read N- to C-terminus: GTPase Der (453 aa).

EngA-type G domains follow at residues 3–167 (PIIV…ISEK) and 187–360 (IKVA…EDSK). GTP is bound by residues 9-16 (GRTNVGKS), 57-61 (DTAGL), 119-122 (NKID), 193-200 (GRPNVGKS), 240-244 (DTAGA), and 305-308 (NKCD). The KH-like domain maps to 361–445 (RKISTSTLIR…PIQIQFKDNE (85 aa)).

This sequence belongs to the TRAFAC class TrmE-Era-EngA-EngB-Septin-like GTPase superfamily. EngA (Der) GTPase family. In terms of assembly, associates with the 50S ribosomal subunit.

Functionally, GTPase that plays an essential role in the late steps of ribosome biogenesis. The polypeptide is GTPase Der (Buchnera aphidicola subsp. Acyrthosiphon pisum (strain Tuc7)).